A 470-amino-acid chain; its full sequence is GTPase Der (470 aa).

2 EngA-type G domains span residues 32–195 (PVVA…PTIS) and 206–379 (RRVA…KSWD). Residues 38–45 (GRPNVGKS), 85–89 (DTGGW), 147–150 (NKVD), 212–219 (GKPNVGKS), 259–263 (DTAGL), and 324–327 (NKWD) contribute to the GTP site. A KH-like domain is found at 380-462 (TRVSTGRLNT…PIRINVRVRE (83 aa)).

It belongs to the TRAFAC class TrmE-Era-EngA-EngB-Septin-like GTPase superfamily. EngA (Der) GTPase family. In terms of assembly, associates with the 50S ribosomal subunit.

Functionally, GTPase that plays an essential role in the late steps of ribosome biogenesis. This chain is GTPase Der, found in Mycolicibacterium vanbaalenii (strain DSM 7251 / JCM 13017 / BCRC 16820 / KCTC 9966 / NRRL B-24157 / PYR-1) (Mycobacterium vanbaalenii).